The chain runs to 278 residues: Shikimate dehydrogenase (NADP(+)) (278 aa).

Shikimate is bound by residues 15–17 and T62; that span reads SMS. K66 (proton acceptor) is an active-site residue. E78 contacts NADP(+). Positions 87 and 102 each coordinate shikimate. Residues 127 to 131, 151 to 156, and I217 contribute to the NADP(+) site; these read GAGGA and NRTPEK. Y219 lines the shikimate pocket. G240 is an NADP(+) binding site.

The protein belongs to the shikimate dehydrogenase family. As to quaternary structure, homodimer.

It carries out the reaction shikimate + NADP(+) = 3-dehydroshikimate + NADPH + H(+). The protein operates within metabolic intermediate biosynthesis; chorismate biosynthesis; chorismate from D-erythrose 4-phosphate and phosphoenolpyruvate: step 4/7. Its function is as follows. Involved in the biosynthesis of the chorismate, which leads to the biosynthesis of aromatic amino acids. Catalyzes the reversible NADPH linked reduction of 3-dehydroshikimate (DHSA) to yield shikimate (SA). In Bacillus licheniformis (strain ATCC 14580 / DSM 13 / JCM 2505 / CCUG 7422 / NBRC 12200 / NCIMB 9375 / NCTC 10341 / NRRL NRS-1264 / Gibson 46), this protein is Shikimate dehydrogenase (NADP(+)).